The primary structure comprises 2037 residues: Protein SWOLLEN 1 (2037 aa).

Disordered stretches follow at residues 141–179 (VEPG…VKTD), 454–487 (REGG…NDRD), 504–531 (SVGY…TDKS), 567–637 (KTSS…KDAV), 686–705 (SLPI…DNTA), 837–893 (VGSP…SGGK), 1011–1045 (ATPE…PMIP), 1148–1197 (KHVQ…ESGP), 1729–1748 (SGET…KRPR), 1793–1812 (KSTR…TGLQ), and 1841–2037 (EAST…QSKK). Positions 147 to 157 (SHERSLSKEET) are enriched in basic and acidic residues. The span at 158–176 (VNLQPNPSVDDTPGESSVV) shows a compositional bias: polar residues. Residues 454–466 (REGGVSKKSDNEG) are compositionally biased toward basic and acidic residues. Low complexity predominate over residues 504–514 (SVGYVSGGSTS). Positions 515–526 (ELAESESQSDSI) are enriched in polar residues. Over residues 841–852 (STSSLDKTAAKS) the composition is skewed to low complexity. The span at 853-865 (SKAKSERKPRRTS) shows a compositional bias: basic residues. 2 stretches are compositionally biased toward polar residues: residues 1025 to 1041 (ETPS…SGTN) and 1151 to 1171 (QSGT…TSTV). Residues 1179 to 1189 (TRVKSRKRKKM) are compositionally biased toward basic residues. Residues 1794–1805 (STREENKPDPLR) are compositionally biased toward basic and acidic residues. Composition is skewed to polar residues over residues 1874–1886 (KTIS…TISR), 1942–1964 (EEQT…STNK), and 2013–2023 (LQTSMMTSKIP). Positions 2028-2037 (SKSHLSQSKK) are enriched in basic residues.

Interacts with importin alpha IMPA1 and IMPA2, required for nuclear-localized proteins import. Mainly expressed in seedlings, flower buds and stems, and, to a lower extent, in leaves and siliques.

The protein resides in the nucleus. Functionally, under salt stress, appears to prevent the accumulation of reactive oxygen species (ROS) in roots and required for the maintenance of cell wall integrity (cellulose, pectin and lignin composition) by interacting with importin alpha (e.g. IMPA1 and IMPA2) and binding to the promoter of several ROS- and cell wall-related genes to regulate their expression. Necessary for cells organization in meristems and root elongation zones as well as for root elongation in high salinity, but not upon osmotic stress. In Arabidopsis thaliana (Mouse-ear cress), this protein is Protein SWOLLEN 1.